Here is a 143-residue protein sequence, read N- to C-terminus: Large ribosomal subunit protein uL13 (143 aa).

Belongs to the universal ribosomal protein uL13 family. In terms of assembly, part of the 50S ribosomal subunit.

Functionally, this protein is one of the early assembly proteins of the 50S ribosomal subunit, although it is not seen to bind rRNA by itself. It is important during the early stages of 50S assembly. This is Large ribosomal subunit protein uL13 from Dehalococcoides mccartyi (strain ATCC BAA-2266 / KCTC 15142 / 195) (Dehalococcoides ethenogenes (strain 195)).